The sequence spans 617 residues: Hemagglutinin glycoprotein (617 aa).

Over 1–37 the chain is Intravirion; that stretch reads MSPQRDRINAFYKDNPHPKGSRIVINREHLMIDRPYV. Residues 1–154 are stalk; the sequence is MSPQRDRINA…RIKLDYDQYC (154 aa). A helical transmembrane segment spans residues 38–58; it reads LLAVLFVMFLSLIGLLAIAGI. Topologically, residues 59-617 are virion surface; it reads RLHRAAIYTA…VTREDGTNRR (559 aa). A glycan (N-linked (GlcNAc...) asparagine; by host) is linked at Asn-168. Residues 171–175 are involved in cell-to-cell fusion dependent on CADM1, CADM2, and NECTIN4; the sequence is LLEAR. Residues Asn-187, Asn-200, Asn-215, and Asn-238 are each glycosylated (N-linked (GlcNAc...) asparagine; by host). 5 disulfides stabilise this stretch: Cys-188-Cys-606, Cys-287-Cys-300, Cys-381-Cys-494, Cys-386-Cys-394, and Cys-570-Cys-579. Asn-416 carries N-linked (GlcNAc...) asparagine; by host glycosylation. The interaction with host NECTIN4 receptor stretch occupies residues 458–543; sequence PMKNLALGVI…VEHAVVYYVY (86 aa).

The protein belongs to the paramyxoviruses hemagglutinin-neuraminidase family. Non-sialidase subfamily. Homodimer; disulfide-linked. Further forms homotetramer (dimer of dimers). Interacts (via C-terminus) with human NECTIN4 (via N-terminus); this interaction allows attachment to the respiratory epithelium and viral entry. Interacts (via C-terminus) with human SLAMF1/CD150 (via N-terminus); this interaction allows attachment and viral entry into the CD150-expressing immune cells.

The protein localises to the virion membrane. It is found in the host cell membrane. In terms of biological role, attaches the virus to the human SLAMF1/CD150 receptor for entry into host dendritic cells, macrophages, activated memory T cells and naive or memory B cells, thereby explaining the long immunosuppression that follows infection. In the respiratory airways, binds to the NECTIN4 receptor for entry into the host cell. During viral entry or virus-mediated fusion between infected cells and neighboring susceptible cells, the head domain of the H protein initially binds to its receptor and then the stalk region of the H protein transmits the fusion-triggering signal to the F protein. Unilateral receptor binding to only one of the covalently linked dimer pairs in the H tetramer is sufficient for F triggering. In case of neuropathogenic strains, host CADM1 (isoform 5) and CADM2 (isoform 5) can interact with measles hemagglutinin to trigger hyperfusogenic F-mediated membrane fusion and presumably transsynaptic cell-to-cell transmission of the virus. The chain is Hemagglutinin glycoprotein (H) from Homo sapiens (Human).